The following is a 260-amino-acid chain: Putative ATP-binding protein BAB2_1147 (260 aa).

Positions 5 to 228 (ISFNNVVMRY…DLPYPRTEAI (224 aa)) constitute an ABC transporter domain. Residue 37–44 (GPSGCGKS) coordinates ATP.

Belongs to the ABC transporter superfamily. The complex is composed of two ATP-binding proteins (BAB2_1147), two transmembrane proteins (BAB2_1148) and a solute-binding protein (BAB2_1146).

It localises to the cell inner membrane. Its function is as follows. Probably part of an ABC transporter complex. Probably Responsible for energy coupling to the transport system. In Brucella abortus (strain 2308), this protein is Putative ATP-binding protein BAB2_1147.